A 5654-amino-acid chain; its full sequence is Mucin-5AC (5654 aa).

The signal sequence occupies residues 1–27; that stretch reads MSVGRRKLALLWALALALACTRHTGHA. The segment at 27 to 49 is disordered; it reads AQDGSSESSYKHHPALSPIARGP. The region spanning 79–249 is the VWFD 1 domain; it reads RVCSTWGSFH…KMDDPTDQCQ (171 aa). 2 disulfide bridges follow: cysteine 81-cysteine 211 and cysteine 103-cysteine 248. A Cu(2+)-binding site is contributed by glutamate 198. Asparagine 205 and asparagine 258 each carry an N-linked (GlcNAc...) asparagine glycan. Cu(2+) is bound by residues histidine 320 and histidine 367. The 57-residue stretch at 338-394 folds into the TIL 1 domain; the sequence is CPNNMQYHECRSPCADTCSNQEHSRACEDHCVAGCFCPEGTVLDDIGQTGCVPVSKC. Positions 394–465 constitute a VWFC 1 domain; sequence CACVYNGAAY…CSYVLTKPCD (72 aa). N-linked (GlcNAc...) asparagine glycosylation occurs at asparagine 415. The VWFD 2 domain maps to 432 to 607; it reads GTCSVLGGAH…NTFKTQAACP (176 aa). Intrachain disulfides connect cysteine 434/cysteine 571, cysteine 456/cysteine 606, and cysteine 478/cysteine 486. The N-linked (GlcNAc...) asparagine glycan is linked to asparagine 524. TIL domains follow at residues 704–761 and 818–863; these read CPKS…ASNC and DTGA…AEDC. The VWFD 3 domain occupies 901-1072; that stretch reads ATCAVYGDGH…NSWKLSPSCP (172 aa). Intrachain disulfides connect cysteine 903–cysteine 1036, cysteine 925–cysteine 1071, cysteine 934–cysteine 1033, and cysteine 953–cysteine 960. The N-linked (GlcNAc...) asparagine glycan is linked to asparagine 1308. The disordered stretch occupies residues 1336 to 1377; it reads LVVSSTHTPSNGPSSAHTGPPSSAWPTTAGTSPRTRLPTASA. Polar residues predominate over residues 1338 to 1377; that stretch reads VSSTHTPSNGPSSAHTGPPSSAWPTTAGTSPRTRLPTASA. The stretch at 1383–1481 is one Cys-rich subdomain 1 repeat; that stretch reads CGEKCLWSPW…RVQCCTPLPC (99 aa). The 9 X Cys-rich subdomain repeats stretch occupies residues 1383-4731; the sequence is CGEKCLWSPW…VLCCETPRGC (3349 aa). Residue tryptophan 1389 is glycosylated (C-linked (Man) tryptophan). Low complexity-rich tracts occupy residues 1483 to 1539 and 1547 to 1575; these read TSSS…TFST and ATST…PSTS. The tract at residues 1483 to 1575 is disordered; sequence TSSSPAQTTP…KPTPTEPSTS (93 aa). A Cys-rich subdomain 2 repeat occupies 1577 to 1677; that stretch reads CLQELCTWTE…IQCCETVNVC (101 aa). C-linked (Man) tryptophan glycosylation is present at tryptophan 1584. The disordered stretch occupies residues 1688–1733; sequence ATTRPTPHPTGAQTQTTFTTHMPSASTEQPTATSRGGPTATSVTQG. The segment covering 1697–1707 has biased composition (low complexity); that stretch reads TGAQTQTTFTT. The segment covering 1708-1733 has biased composition (polar residues); that stretch reads HMPSASTEQPTATSRGGPTATSVTQG. One copy of the Cys-rich subdomain 3 repeat lies at 1743 to 1847; that stretch reads CHPRCTWTKW…VLCCETPRGC (105 aa). A C-linked (Man) tryptophan glycan is attached at tryptophan 1749. Positions 1849-1948 are disordered; it reads MTSTPGSTSS…KPTPTEPSTS (100 aa). 2 stretches are compositionally biased toward low complexity: residues 1850 to 1912 and 1920 to 1948; these read TSTP…TFST and ATST…PSTS. The Cys-rich subdomain 4 repeat unit spans residues 1950–2050; the sequence is CLQELCTWTE…IQCCETVNVC (101 aa). C-linked (Man) tryptophan glycosylation is present at tryptophan 1957. Residues 2059-2110 form a disordered region; that stretch reads TVATTRPTPHPTGAQTQTTFTTHMPSASTEQPTATSRGGPTATSVTQGTHTT. Residues 2070–2080 show a composition bias toward low complexity; it reads TGAQTQTTFTT. The segment covering 2081–2110 has biased composition (polar residues); that stretch reads HMPSASTEQPTATSRGGPTATSVTQGTHTT. Residues 2116–2220 form a Cys-rich subdomain 5 repeat; sequence CHPRCTWTTW…VLCCETPKGC (105 aa). Residue tryptophan 2122 is glycosylated (C-linked (Man) tryptophan). The span at 2224–2234 shows a compositional bias: low complexity; it reads STPVTAPSTPS. The interval 2224-3214 is disordered; the sequence is STPVTAPSTP…SHVSISKTTH (991 aa). The segment covering 2235-2249 has biased composition (polar residues); the sequence is GRATSPTQSTSSWQK. Low complexity-rich tracts occupy residues 2250 to 3184 and 3192 to 3214; these read SRTT…TPGP and PTTS…KTTH. Positions 2257–3200 are 107 X 8 AA approximate tandem repeats of T-T-S-T-T-S-A-P; sequence TTSTTSTPQT…VPTTSTASVS (944 aa). O-linked (GalNAc) threonine glycosylation is found at threonine 2395, threonine 2405, threonine 2451, threonine 2461, threonine 2531, threonine 2541, threonine 2571, threonine 2581, threonine 2699, threonine 2709, threonine 2883, threonine 2893, threonine 2979, threonine 2989, threonine 3067, and threonine 3077. One copy of the Cys-rich subdomain 6 repeat lies at 3222-3326; it reads CHLRCTWTKW…VLCCETPKGC (105 aa). C-linked (Man) tryptophan glycosylation is present at tryptophan 3228. Low complexity predominate over residues 3329–3340; the sequence is TSTPVTAPSTPS. A disordered region spans residues 3329 to 3515; it reads TSTPVTAPST…SVSKTTHSQP (187 aa). The span at 3341 to 3355 shows a compositional bias: polar residues; that stretch reads GRATSPTQSTSSWQK. Over residues 3356–3513 the composition is skewed to low complexity; it reads SRTTTLVTTS…HVSVSKTTHS (158 aa). The interval 3363-3498 is 17 X 8 AA approximate tandem repeats of T-T-S-T-T-S-A-P; sequence TTSTTSTPQT…VTTTSTASVS (136 aa). A Cys-rich subdomain 7 repeat occupies 3520–3660; the sequence is CHPRCTWTKW…WQKSRTTTLV (141 aa). C-linked (Man) tryptophan glycosylation is present at tryptophan 3526. Residues 3628 to 3638 are compositionally biased toward low complexity; the sequence is STSVTAPSTPS. Positions 3628 to 3951 are disordered; sequence STSVTAPSTP…KTTHSQPVTR (324 aa). The segment covering 3639-3660 has biased composition (polar residues); the sequence is GRATSPTQSTSSWQKSRTTTLV. A 34 X 8 AA approximate tandem repeats of T-T-S-T-T-S-A-P region spans residues 3661 to 3931; sequence TSSITSTTQT…VPTTSTASVS (271 aa). A compositionally biased stretch (low complexity) spans 3661–3946; it reads TSSITSTTQT…HVSVSKTTHS (286 aa). The N-linked (GlcNAc...) asparagine glycan is linked to asparagine 3774. A Cys-rich subdomain 8 repeat occupies 3953–4057; that stretch reads CHPRCTWTKW…VLCCETPKGC (105 aa). Tryptophan 3959 is a glycosylation site (C-linked (Man) tryptophan). Residues 4060-4071 are compositionally biased toward low complexity; the sequence is TSTPVTAPSTPS. The disordered stretch occupies residues 4060 to 4625; it reads TSTPVTAPST…KTTHSQPVTS (566 aa). The span at 4072-4088 shows a compositional bias: polar residues; the sequence is GRATSPTQSTSSWQKSR. Residues 4089 to 4610 are compositionally biased toward low complexity; it reads TTTLVTTSTT…TTPVSKTSTS (522 aa). A 58 X 8 AA approximate tandem repeats of T-T-S-T-T-S-A-P region spans residues 4093-4595; the sequence is VTTSTTSTPQ…TSGPGTTPSP (503 aa). O-linked (GalNAc) threonine glycans are attached at residues threonine 4224, threonine 4234, threonine 4296, threonine 4306, threonine 4320, threonine 4330, threonine 4376, threonine 4386, threonine 4440, threonine 4450, threonine 4480, threonine 4490, threonine 4512, threonine 4522, threonine 4568, and threonine 4578. Residues 4611-4624 show a composition bias toward polar residues; sequence HLSVSKTTHSQPVT. One copy of the Cys-rich subdomain 9 repeat lies at 4627–4731; the sequence is CHPLCAWTKW…VLCCETPRGC (105 aa). A C-linked (Man) tryptophan glycan is attached at tryptophan 4633. Positions 4830–4849 are disordered; the sequence is TLPPAPATSPSISTSEPVTE. In terms of domain architecture, VWFC 2 spans 4852–4918; the sequence is CPNAVPPRKK…DGCCHHYQCQ (67 aa). N-linked (GlcNAc...) asparagine glycans are attached at residues asparagine 4869 and asparagine 4942. A VWFD 4 domain is found at 4919-5103; it reads CVCSGWGDPH…VSIPDQPACH (185 aa). Cystine bridges form between cysteine 4921–cysteine 5063, cysteine 4943–cysteine 5102, and cysteine 4967–cysteine 4975. N-linked (GlcNAc...) asparagine glycans are attached at residues asparagine 5057, asparagine 5093, and asparagine 5236. One can recognise a VWFC 3 domain in the interval 5276–5345; sequence PRCLGPHGEP…GQCCPQYSCA (70 aa). 5 N-linked (GlcNAc...) asparagine glycosylation sites follow: asparagine 5347, asparagine 5377, asparagine 5386, asparagine 5455, and asparagine 5528. The region spanning 5381-5448 is the VWFC 4 domain; the sequence is TVCSINGTLY…QSGQCCGTCV (68 aa). Disulfide bonds link cysteine 5532/cysteine 5582, cysteine 5546/cysteine 5596, cysteine 5557/cysteine 5612, and cysteine 5561/cysteine 5614. Positions 5532–5620 constitute a CTCK domain; it reads CAVYHRSLII…ECGCMGRRCP (89 aa). A glycan (N-linked (GlcNAc...) asparagine) is linked at asparagine 5591. The interval 5622-5654 is disordered; the sequence is PGDTQHSEEAEPEPSQEAESGSWERGVPVSPMH.

Homomultimer; disulfide-linked. The N- and C-terminus mediate their assembly into higher order structures to form filaments. The CTCK domains of two polypeptides associate in the endoplasmic reticulum to generate intermolecularly disulfide-bonded dimers. These dimers progress to the Golgi apparatus, which is a more acidic environment than the endoplasmic reticulum. Under acidic conditions, the N-termini form non-covalent intermolecular interactions that juxtapose assemblies from different CTCK-linked dimers to produce long, disulfide-linked polymers that remain highly compact until secretion. Post-translationally, C-, O- and N-glycosylated. O-glycosylated on the second and last Thr of the Thr-/Ser-rich tandem repeats TTPSPVPTTSTTSA. One form of glycosylation is also known as Lewis B (LeB) blood group antigen, a tetrasaccharide consisting of N-acetylglucosamine having a fucosyl residue attached. It has a role as an epitope and antigen and functions as a receptor for H.pylori binding and facilitates infection. C-mannosylation in the Cys-rich subdomains may be required for proper folding of these regions and for export from the endoplasmic reticulum during biosynthesis. In terms of processing, proteolytic cleavage in the C-terminal is initiated early in the secretory pathway and does not involve a serine protease. The extent of cleavage is increased in the acidic parts of the secretory pathway. Cleavage generates a reactive group which could link the protein to a primary amide. As to expression, highly expressed in surface mucosal cells of respiratory tract and stomach epithelia. Overexpressed in a number of carcinomas. Also expressed in Barrett's esophagus epithelium and in the proximal duodenum.

It localises to the secreted. Gel-forming glycoprotein of gastric and respiratory tract epithelia that protects the mucosa from infection and chemical damage by binding to inhaled microorganisms and particles that are subsequently removed by the mucociliary system. Interacts with H.pylori in the gastric epithelium, Barrett's esophagus as well as in gastric metaplasia of the duodenum (GMD). The chain is Mucin-5AC from Homo sapiens (Human).